We begin with the raw amino-acid sequence, 339 residues long: Non-homologous end joining protein Ku (339 aa).

One can recognise a Ku domain in the interval 10–187 (ITFGLVNIPV…LPKATTGKPT (178 aa)). Disordered stretches follow at residues 230 to 251 (DSGKTHQLTPPAEEEEAPRQGA) and 263 to 339 (SLGQ…KHAA). Residues 267–277 (RGKEDKEDATP) are compositionally biased toward basic and acidic residues. A compositionally biased stretch (basic residues) spans 278 to 289 (ARRKAPARHAAA). The segment covering 290–310 (RKQPAAKRAATPPAKRASTAA) has biased composition (low complexity).

Belongs to the prokaryotic Ku family. Homodimer. Interacts with LigD.

In terms of biological role, with LigD forms a non-homologous end joining (NHEJ) DNA repair enzyme, which repairs dsDNA breaks with reduced fidelity. Binds linear dsDNA with 5'- and 3'- overhangs but not closed circular dsDNA nor ssDNA. Recruits and stimulates the ligase activity of LigD. The protein is Non-homologous end joining protein Ku of Cupriavidus necator (strain ATCC 17699 / DSM 428 / KCTC 22496 / NCIMB 10442 / H16 / Stanier 337) (Ralstonia eutropha).